We begin with the raw amino-acid sequence, 255 residues long: 5'-nucleotidase SurE (255 aa).

4 residues coordinate a divalent metal cation: aspartate 8, aspartate 9, serine 39, and asparagine 91.

This sequence belongs to the SurE nucleotidase family. It depends on a divalent metal cation as a cofactor.

The protein localises to the cytoplasm. It carries out the reaction a ribonucleoside 5'-phosphate + H2O = a ribonucleoside + phosphate. In terms of biological role, nucleotidase that shows phosphatase activity on nucleoside 5'-monophosphates. This chain is 5'-nucleotidase SurE, found in Acinetobacter baumannii (strain SDF).